Consider the following 303-residue polypeptide: Glutathione transport system permease protein GsiD (303 aa).

The next 6 membrane-spanning stretches (helical) occupy residues 40-60, 105-125, 144-164, 165-185, 222-242, and 266-286; these read AMTA…ARWI, LAAG…LGLL, LFAF…GSGI, ANVI…LVRG, IVVF…SLSF, and VIAP…VLAF. An ABC transmembrane type-1 domain is found at 101–290; that stretch reads AQISLAAGVF…LTVLAFNLLG (190 aa).

Belongs to the binding-protein-dependent transport system permease family. As to quaternary structure, the complex is composed of two ATP-binding proteins (GsiA), two transmembrane proteins (GsiC and GsiD) and a solute-binding protein (GsiB).

Its subcellular location is the cell inner membrane. Its function is as follows. Part of the ABC transporter complex GsiABCD involved in glutathione import. Probably responsible for the translocation of the substrate across the membrane. In Shigella flexneri serotype 5b (strain 8401), this protein is Glutathione transport system permease protein GsiD.